The primary structure comprises 539 residues: Glycerophosphoinositol inositolphosphodiesterase GDPD2 (539 aa).

At 1 to 40 the chain is on the cytoplasmic side; that stretch reads MADSPGCCSIWARCLHCLYSCHWRKYPKQKMQTSKCDCIW. A helical membrane pass occupies residues 41–61; sequence FGLLFLTFLLSLGWLYIGLIL. Over 62–83 the chain is Extracellular; that stretch reads LNDLHNFNEFLFRHWGHWMDWS. Residues 84 to 104 traverse the membrane as a helical segment; that stretch reads LIVLLVVSLLVTYASLLLLLG. Topologically, residues 105–121 are cytoplasmic; sequence LLLQLCGQPLHLHSLHK. A helical membrane pass occupies residues 122 to 142; sequence VLLLLIVLLVAAGLVGLDIQW. At 143-154 the chain is on the extracellular side; it reads RQEWHSLRLSLQ. Residues 155 to 175 traverse the membrane as a helical segment; that stretch reads ATAPFLHIGAVAGITLLAWPV. Residues 176 to 189 are Cytoplasmic-facing; it reads ADTFYRIHPRGPKV. A helical transmembrane segment spans residues 190–210; the sequence is LLLLLFFGVTLVIYLMPLLFI. Residues 211 to 491 are Extracellular-facing; sequence SSPCIMKLRD…PLWLLPPQKY (281 aa). One can recognise a GP-PDE domain in the interval 225-480; the sequence is PGLVGHRGAP…NACQLLQQMQ (256 aa). Glu257, Asp259, and His272 together coordinate a divalent metal cation. Asn333 carries N-linked (GlcNAc...) asparagine glycosylation. The chain crosses the membrane as a helical span at residues 492–512; the sequence is LMIWVITDCASILLLLSIFLL. The Cytoplasmic portion of the chain corresponds to 513 to 539; it reads RGGCAKRNRTGLETAVLLTKINNFASE.

The protein belongs to the glycerophosphoryl diester phosphodiesterase family. Requires Ca(2+) as cofactor. In terms of tissue distribution, detected in spleen, femur and calvaria.

Its subcellular location is the cell membrane. The protein resides in the cytoplasm. The protein localises to the cytoskeleton. The catalysed reaction is sn-glycero-3-phospho-1D-myo-inositol + H2O = 1D-myo-inositol 1-phosphate + glycerol + H(+). Its function is as follows. Has glycerophosphoinositol inositolphosphodiesterase activity and specifically hydrolyzes glycerophosphoinositol, with no activity for other substrates such as glycerophosphoinositol 4-phosphate, glycerophosphocholine, glycerophosphoethanolamine, and glycerophosphoserine. Accelerates the program of osteoblast differentiation and growth. May play a role in remodeling of the actin cytoskeleton. This Mus musculus (Mouse) protein is Glycerophosphoinositol inositolphosphodiesterase GDPD2 (Gdpd2).